A 327-amino-acid chain; its full sequence is MAKPAKRVAVTGAAGQIAYSLLFRIANGDLLGKDQPVILQLLDLPQAQGAVKGVVMELDDCAFPLLSGVVITDDPEVAFKDADVALLVGARPRSKGMERKDLLSANAEIFTVQGKALNKVASRDVKVLVVGNPANTNAYIAMKSAPDLPKKNFTAMLRLDHNRALSQLAAKSGKPVASIEKLAVWGNHSPTMYPDFRFATAEGQDLTKLINDDEWNRNTFIPTVGKRGAAIIEARGLSSAASAANAAIDHVRDWVLGTNGKWVTMGIPSDGSYGIPEDIIYGVPVTCENGEYKRVEGLEIDAFSREKMDGTLNELLEEREGVQHLLG.

An NAD(+)-binding site is contributed by 12-18; the sequence is GAAGQIA. Arg-93 and Arg-99 together coordinate substrate. NAD(+) contacts are provided by residues Asn-106, Gln-113, and 130–132; that span reads VGN. The substrate site is built by Asn-132 and Arg-163. The active-site Proton acceptor is His-188.

It belongs to the LDH/MDH superfamily. MDH type 2 family.

The enzyme catalyses (S)-malate + NAD(+) = oxaloacetate + NADH + H(+). Functionally, catalyzes the reversible oxidation of malate to oxaloacetate. In Paraburkholderia phytofirmans (strain DSM 17436 / LMG 22146 / PsJN) (Burkholderia phytofirmans), this protein is Malate dehydrogenase.